The primary structure comprises 232 residues: Methylthioribulose-1-phosphate dehydratase (232 aa).

C91 contributes to the substrate binding site. Residues H109, H111, and H191 each coordinate Zn(2+).

This sequence belongs to the aldolase class II family. MtnB subfamily. Zn(2+) is required as a cofactor.

Its subcellular location is the cytoplasm. The enzyme catalyses 5-(methylsulfanyl)-D-ribulose 1-phosphate = 5-methylsulfanyl-2,3-dioxopentyl phosphate + H2O. It functions in the pathway amino-acid biosynthesis; L-methionine biosynthesis via salvage pathway; L-methionine from S-methyl-5-thio-alpha-D-ribose 1-phosphate: step 2/6. Functionally, catalyzes the dehydration of methylthioribulose-1-phosphate (MTRu-1-P) into 2,3-diketo-5-methylthiopentyl-1-phosphate (DK-MTP-1-P). This Schizosaccharomyces japonicus (strain yFS275 / FY16936) (Fission yeast) protein is Methylthioribulose-1-phosphate dehydratase.